Consider the following 173-residue polypeptide: Bacterial deubiquitinase-like protein BilC (173 aa).

The Zn(2+) site is built by His-103, His-105, and Asp-115.

This sequence belongs to the M67B family. Zn(2+) is required as a cofactor.

Component of the Bil (bacterial ISG15-like) antiviral defense system, composed of BilA, BilB, BilC and BilD. The Bil system specifically conjugates a ubiquitin-like moiety (bilA) to the bacteriophage central tail fiber (CTF, or tip attachment protein J) via reactions involving E1 (bilD) and E2 (bilB). Modifies CTF of phage SECphi27 and SECphi4, which probably interferes with assembly of the phage tail. Also modifies T5 baseplate hub protein pb3 (gene D16), but not gp27 of phage T6 (Bil defends against T6). BilC is a probable metalloprotease that may cleave non-specifically conjugated targets. Bil-encoding bacteria produce mostly defective phage SECphi27, many of which have phage assembly defects, including no tails. SECphi27 phage progeny produced in E.coli with the Bil system inject less DNA into naive host cells, maybe because the phage are less able to adsorb and inject their DNA into host cells. In terms of biological role, expression of the Bil system in E.coli (strain MG1655) confers about 100-fold resistance to phage SECphi27, SECphi18, SECphi6, SECphi4 and T5, but not to SECphi17. When cells expressing the Bil system are infected by phage SECphi27 at low multiplicity of infection (0.03 MOI) the culture survives, at 3.0 MOI the culture collapses at the same time as cells without the Bil system. Its function is as follows. Cleaves a ubiquitin-GFP (Ubl-GFP) fusion protein in vivo. This chain is Bacterial deubiquitinase-like protein BilC, found in Collimonas sp. (strain OK412).